Reading from the N-terminus, the 483-residue chain is MLTLDTLNTMLAVSEEGMVEEMILALLASPQLVIFFEKFPRLKNAVTADLPRWREALRSRLKDAHVPPELMEEVMCYQQSQLLSTPQFIVQLPQILALLHRLHSPYAAQAKQLTESNSTFTPALHTLFLQRWRLSLVVQATTLNQQLLEEEREQLLSDVQERMTLSGQLEPTLAENDNAAGRLWDMSAGQLKRGDYQLIVKYGEFLAAQPELMQLAEQLGRSREAKSVPKKDAPMETFRTLVREPATVPEQVDGIQQSDDILRLLPPELATLGITELEYEFYRRLVEKQLLTYRLHGEAWREKVTERPVVHQDVDEQPRGPFIVCVDTSGSMGGFNEQCAKAFCLALMRVALADNRRCFIMLFSTDVVRYELSGPEGIEQAIRFLSQRFRGGTDIASCFRAIIERMQGREWFDADAVVISDFIAQRLPDDVVSKVGELQRLHQHRFHAVAMSAHGKPGIMRIFDHIWRFDTGMRSRLLRRWRR.

This sequence belongs to the ViaA family. Homodimer. Interacts with RavA.

The protein localises to the cytoplasm. Component of the RavA-ViaA chaperone complex, which may act on the membrane to optimize the function of some of the respiratory chains. ViaA stimulates the ATPase activity of RavA. The sequence is that of Regulatory protein ViaA from Salmonella schwarzengrund (strain CVM19633).